The sequence spans 550 residues: MFCVQCEQTIRTPAGNGCSYAQGMCGKTAETSDLQDLLIAALQGLSAWAVKAREYGIINHDVDNFAPRAFFSTLTNVNFDSPRIVGYAREAIALREALKAQCLSVDANAHCDNPMADLQLVSDDLGELQRQAAEFTPNKDKAAIGENILGLRLLCLYGLKGAAAYMEHAHVLGQYDNDIYAQYHKIMAWLGTWPADMNALLECAMEIGQMNFKVMSILDAGETTKYGHPTPTQVNVKATEGKCILISGHDLKDLYNLLEQTEGTGVNVYTHGEMLPAHGYPELRKFKHLVGNYGSGWQNQQVEFARFPGPIVMTSNCIIDPTVGSYDDRIWTRSIVGWPGVSHLEGDDFGPVIAQAQQMAGFPYSEIPHLITVGFGRQTLLGAADTLIDLVSRKKLRHIFLVGGCDGARGERNYFTDFATSVPDDCLILTLACGKYRFNKLEFGDIEGLPRLVDAGQCNDAYSAIILAVTLAEKLGCGVNDLPLSLVLSWFEQKAIVILLTLLSLGVKNIVTGPTAPGFFTPDLLAILNEKFGLRSVTTVEEDMKQLLSA.

Residues Cys3, Cys6, Cys18, and Cys25 each contribute to the [2Fe-2S] cluster site. Hybrid [4Fe-2O-2S] cluster contacts are provided by His249, Glu273, Cys317, Cys405, Cys433, Cys458, Glu492, and Lys494. Cys405 is modified (cysteine persulfide).

The protein belongs to the HCP family. [2Fe-2S] cluster is required as a cofactor. It depends on hybrid [4Fe-2O-2S] cluster as a cofactor.

It is found in the cytoplasm. The catalysed reaction is A + NH4(+) + H2O = hydroxylamine + AH2 + H(+). Its function is as follows. Catalyzes the reduction of hydroxylamine to form NH(3) and H(2)O. This is Hydroxylamine reductase from Salmonella schwarzengrund (strain CVM19633).